The primary structure comprises 792 residues: Starch synthase 2, chloroplastic/amyloplastic (792 aa).

The transit peptide at 1–55 (MASVAESSFPLLCQIKTQRRINSSTLRHSRVSYHDLPSGSLSFRSRSFVLGHRCK) directs the protein to the chloroplast. A disordered region spans residues 105 to 295 (IKESTPDLDD…GKDEEKPPPL (191 aa)). Residues 145-156 (GSVSPSTYGKSS) are compositionally biased toward polar residues. Low complexity predominate over residues 179-192 (SSASVISSSPVTSP). Polar residues predominate over residues 221 to 233 (SVMTSPEKTSDPV). A compositionally biased stretch (basic and acidic residues) spans 266-275 (KTEKYVEKTP). Position 315 (Lys-315) interacts with ADP-alpha-D-glucose.

This sequence belongs to the glycosyltransferase 1 family. Bacterial/plant glycogen synthase subfamily. Expressed in roots, leaves and flowers.

Its subcellular location is the plastid. The protein localises to the chloroplast. It localises to the amyloplast. The catalysed reaction is [(1-&gt;4)-alpha-D-glucosyl](n) + ADP-alpha-D-glucose = [(1-&gt;4)-alpha-D-glucosyl](n+1) + ADP + H(+). Its pathway is glycan biosynthesis; starch biosynthesis. Its function is as follows. Involved in the synthesis of glycan chains within amylopectin in leaves. Is required to produce chains with a degree of polymerization of 12 to 25 (DP12-DP25). The chain is Starch synthase 2, chloroplastic/amyloplastic (SS2) from Arabidopsis thaliana (Mouse-ear cress).